A 322-amino-acid polypeptide reads, in one-letter code: Undecaprenyl-phosphate 4-deoxy-4-formamido-L-arabinose transferase (322 aa).

At 1 to 235 (MFEIHPVKKV…TCLTTTPLRM (235 aa)) the chain is on the cytoplasmic side. The helical transmembrane segment at 236-256 (LSLLGSIIAIGGFSIAVLLVI) threads the bilayer. Residues 257–269 (LRLTFGPQWAAEG) lie on the Periplasmic side of the membrane. Residues 270 to 290 (VFMLFAVLFTFIGAQFIGMGL) traverse the membrane as a helical segment. Residues 291–322 (LGEYIGRIYTDVRARPRYFVQQVIRPSSKENE) lie on the Cytoplasmic side of the membrane.

It belongs to the glycosyltransferase 2 family.

It is found in the cell inner membrane. The enzyme catalyses UDP-4-deoxy-4-formamido-beta-L-arabinose + di-trans,octa-cis-undecaprenyl phosphate = 4-deoxy-4-formamido-alpha-L-arabinopyranosyl di-trans,octa-cis-undecaprenyl phosphate + UDP. Its pathway is glycolipid biosynthesis; 4-amino-4-deoxy-alpha-L-arabinose undecaprenyl phosphate biosynthesis; 4-amino-4-deoxy-alpha-L-arabinose undecaprenyl phosphate from UDP-4-deoxy-4-formamido-beta-L-arabinose and undecaprenyl phosphate: step 1/2. It functions in the pathway bacterial outer membrane biogenesis; lipopolysaccharide biosynthesis. Functionally, catalyzes the transfer of 4-deoxy-4-formamido-L-arabinose from UDP to undecaprenyl phosphate. The modified arabinose is attached to lipid A and is required for resistance to polymyxin and cationic antimicrobial peptides. The protein is Undecaprenyl-phosphate 4-deoxy-4-formamido-L-arabinose transferase of Shigella dysenteriae serotype 1 (strain Sd197).